Consider the following 230-residue polypeptide: Cytidylate kinase (230 aa).

An ATP-binding site is contributed by 12–20 (GPSGAGKGT).

It belongs to the cytidylate kinase family. Type 1 subfamily.

It localises to the cytoplasm. The catalysed reaction is CMP + ATP = CDP + ADP. It catalyses the reaction dCMP + ATP = dCDP + ADP. The protein is Cytidylate kinase of Shewanella baltica (strain OS223).